The primary structure comprises 739 residues: Trehalose phosphorylase (739 aa).

A propeptide spanning residues 1-26 (MSTPHHQFESKSSTAIRRRLSSSVSS) is cleaved from the precursor. Residues 1-28 (MSTPHHQFESKSSTAIRRRLSSSVSSKQ) are disordered.

Belongs to the glycosyltransferase group 1 family. Glycosyltransferase 4 subfamily. Homodimer.

It carries out the reaction alpha,alpha-trehalose + phosphate = alpha-D-glucose + alpha-D-glucose 1-phosphate. Its function is as follows. Reversibly catalyzes the synthesis and degradation of trehalose from glucose and alpha-D-glucose 1-phosphate. The equilibrium lies in the direction of trehalose synthesis. In Pleurotus pulmonarius (Indian oyster mushroom), this protein is Trehalose phosphorylase.